We begin with the raw amino-acid sequence, 556 residues long: Chaperone protein HscC (556 aa).

It belongs to the heat shock protein 70 family.

Its function is as follows. Probable chaperone. Has ATPase activity. Not stimulated by DnaJ. This chain is Chaperone protein HscC (hscC), found in Escherichia coli (strain K12).